Consider the following 207-residue polypeptide: Ion-translocating oxidoreductase complex subunit G (207 aa).

A helical transmembrane segment spans residues 11–31 (GILLGFIALLCTIISTGIFFL). Thr-175 carries the FMN phosphoryl threonine modification.

It belongs to the RnfG family. In terms of assembly, the complex is composed of six subunits: RnfA, RnfB, RnfC, RnfD, RnfE and RnfG. It depends on FMN as a cofactor.

It is found in the cell inner membrane. Its function is as follows. Part of a membrane-bound complex that couples electron transfer with translocation of ions across the membrane. The protein is Ion-translocating oxidoreductase complex subunit G of Haemophilus influenzae (strain 86-028NP).